The following is a 241-amino-acid chain: HTH-type quorum-sensing regulator RhlR (241 aa).

Residues 174-239 form the HTH luxR-type domain; sequence LMSNPVCLSH…LAAAYAAALG (66 aa). Positions 198 to 217 form a DNA-binding region, H-T-H motif; the sequence is SGEIAIILSISESTVNFHHK.

Belongs to the autoinducer-regulated transcriptional regulatory protein family. As to quaternary structure, homodimer in the absence of any acyl-L-homoserine lactone. The presence of the autoinducer C4-HSL has no significant effect on dimerization whereas N-(3-oxododecanoyl)-L-homoserine lactone (3O-C12-HSL), the LasR inducer, is able to dissociate the RhlR homodimers into monomers.

Its subcellular location is the cytoplasm. With respect to regulation, activated by interaction with the autoinducer signal molecule N-butanoyl-L-homoserine lactone (C4-HSL or BHL), the product of the RhlI synthase. Is also activated by binding to rosmarinic acid (RA), a homoserine lactone mimic produced by plants, which induces a broad quorum sensing response, including the induction of all major quorum sensing controlled virulence factors. Rosmarinic acid secretion may be a plant defense mechanism to stimulate a premature quorum sensing response. Functionally, quorum-sensing regulator that controls the expression of multiple virulence factors in response to extracellular signaling molecules called autoinducers. Involved, among others, in the transcriptional regulation of genes that are responsible for rhamnolipid surfactant biosynthesis. Acts by binding to a specific sequence in the rhlAB regulatory region, both in the presence and in the absence of its autoinducer. In the former case it activates transcription of the promoter, whereas in the latter it acts as a transcriptional repressor. Also regulates the expression of the rmlBDAC operon, encoding dTDP-L-rhamnose biosynthetic enzymes, by binding to the rml box in the promoter region. In addition, is involved in the regulation of the production of elastase (lasB) and pyocyanine. In Pseudomonas aeruginosa (strain ATCC 15692 / DSM 22644 / CIP 104116 / JCM 14847 / LMG 12228 / 1C / PRS 101 / PAO1), this protein is HTH-type quorum-sensing regulator RhlR.